The following is a 224-amino-acid chain: ATP synthase subunit a (224 aa).

6 helical membrane-spanning segments follow: residues 17–37, 78–98, 104–124, 136–156, 176–196, and 201–221; these read FIYMTHMLLAAGIALMLVKMA, LVATIGLFVGIANLIGVVPGF, FLEFAFTLALSVFIYYNYEGI, FLGPVWWLYWLMFPIEIVSHF, FLMVILMLAPWVLPMIPYALL, and FLQAFIFMMLTYVYLGSAIAV.

This sequence belongs to the ATPase A chain family. F-type ATPases have 2 components, CF(1) - the catalytic core - and CF(0) - the membrane proton channel. CF(1) has five subunits: alpha(3), beta(3), gamma(1), delta(1), epsilon(1). CF(0) has three main subunits: a(1), b(2) and c(9-12). The alpha and beta chains form an alternating ring which encloses part of the gamma chain. CF(1) is attached to CF(0) by a central stalk formed by the gamma and epsilon chains, while a peripheral stalk is formed by the delta and b chains.

It localises to the cell inner membrane. Its function is as follows. Key component of the proton channel; it plays a direct role in the translocation of protons across the membrane. This Sulfurimonas denitrificans (strain ATCC 33889 / DSM 1251) (Thiomicrospira denitrificans (strain ATCC 33889 / DSM 1251)) protein is ATP synthase subunit a.